The chain runs to 107 residues: Multidrug resistance protein mmr (107 aa).

Helical transmembrane passes span 2 to 19 (AYLFLFCAIFVEVVATTL), 29 to 51 (LVPTLACLAGYAVTFTLLALSIS), 58 to 77 (VAYALWSAIGTAAIVLIAVL), and 82 to 104 (PVSVAKVVGVALIIVGVITLNLA).

The protein belongs to the drug/metabolite transporter (DMT) superfamily. Small multidrug resistance (SMR) (TC 2.A.7.1) family. Mmr subfamily.

It localises to the cell membrane. In terms of biological role, multidrug efflux pump. Confers resistance to tetraphenylphosphonium (TPP), erythromycin, ethidium bromide, acriflavine, safranin O and pyronin Y. In Mycobacterium leprae (strain TN), this protein is Multidrug resistance protein mmr (mmr).